The chain runs to 1133 residues: Error-prone DNA polymerase (1133 aa).

It belongs to the DNA polymerase type-C family. DnaE2 subfamily.

The protein localises to the cytoplasm. It carries out the reaction DNA(n) + a 2'-deoxyribonucleoside 5'-triphosphate = DNA(n+1) + diphosphate. Functionally, DNA polymerase involved in damage-induced mutagenesis and translesion synthesis (TLS). It is not the major replicative DNA polymerase. This is Error-prone DNA polymerase from Anaeromyxobacter sp. (strain K).